The sequence spans 98 residues: Integration host factor subunit alpha (98 aa).

This sequence belongs to the bacterial histone-like protein family. In terms of assembly, heterodimer of an alpha and a beta chain.

Functionally, this protein is one of the two subunits of integration host factor, a specific DNA-binding protein that functions in genetic recombination as well as in transcriptional and translational control. The polypeptide is Integration host factor subunit alpha (Idiomarina loihiensis (strain ATCC BAA-735 / DSM 15497 / L2-TR)).